Here is a 94-residue protein sequence, read N- to C-terminus: NADH-ubiquinone oxidoreductase 10.5 kDa subunit (94 aa).

This sequence belongs to the complex I NDUFA2 subunit family. Complex I is composed of about 40 different subunits.

Its subcellular location is the mitochondrion inner membrane. Functionally, accessory subunit of the mitochondrial membrane respiratory chain NADH dehydrogenase (Complex I), that is believed not to be involved in catalysis. Complex I functions in the transfer of electrons from NADH to the respiratory chain. The immediate electron acceptor for the enzyme is believed to be ubiquinone. This chain is NADH-ubiquinone oxidoreductase 10.5 kDa subunit (nuo-10.5), found in Neurospora crassa (strain ATCC 24698 / 74-OR23-1A / CBS 708.71 / DSM 1257 / FGSC 987).